We begin with the raw amino-acid sequence, 368 residues long: 2-aminoethylphosphonate--pyruvate transaminase (368 aa).

K192 bears the N6-(pyridoxal phosphate)lysine mark.

It belongs to the class-V pyridoxal-phosphate-dependent aminotransferase family. PhnW subfamily. As to quaternary structure, homodimer. Requires pyridoxal 5'-phosphate as cofactor.

It catalyses the reaction (2-aminoethyl)phosphonate + pyruvate = phosphonoacetaldehyde + L-alanine. Involved in phosphonate degradation. This is 2-aminoethylphosphonate--pyruvate transaminase from Pseudomonas putida (strain ATCC 700007 / DSM 6899 / JCM 31910 / BCRC 17059 / LMG 24140 / F1).